We begin with the raw amino-acid sequence, 360 residues long: Probable arginine kinase ZC434.8 (360 aa).

Residues 10 to 92 form the Phosphagen kinase N-terminal domain; the sequence is SIEEVYTKLQ…FNPVIEEYHN (83 aa). 65–69 lines the substrate pocket; the sequence is GVGIY. The Phosphagen kinase C-terminal domain occupies 122–359; sequence FIVSTRIRCG…KKLIELEKAA (238 aa). Residues 125 to 129 and His-189 contribute to the ATP site; that span reads STRIR. Residue Glu-229 participates in substrate binding. Arg-233 serves as a coordination point for ATP. A substrate-binding site is contributed by Cys-275. Residues 284-288, 312-317, and Asp-327 contribute to the ATP site; these read RASVH and RGIHGE. Glu-317 provides a ligand contact to substrate.

It belongs to the ATP:guanido phosphotransferase family.

The enzyme catalyses L-arginine + ATP = N(omega)-phospho-L-arginine + ADP + H(+). The protein is Probable arginine kinase ZC434.8 of Caenorhabditis elegans.